A 452-amino-acid polypeptide reads, in one-letter code: MKETIVAQATAPGRGGIGILRVSGPLATEVAQAILGKCPKPRMADYLPFKDADGTILDQGIALYFKSPNSFTGEDVLELQGHGGQVVLDLLLKRILQIDGIRLARPGEFSEQAFLNDKFDLAQAEAIADLIDATSEQAARSALKSLQGEFSKKVNELVDSVIYLRTYVEASIDFPDEEIDFLADGKIEANLRSIINQLEDVRAEAKQGSILREGMKVVIAGRPNAGKSSLLNALAGREAAIVTDIAGTTRDVLREHIHIDGMPLHIIDTAGLRDATDEVERIGISRAWTEIEQADRIILMLDSSDPESVDLSKVRSEFLAKLPSTLPVTIVRNKIDLNGEQASESEQSGYQMISLSAQTHDGVKLLREHLKQAMGFQTGMEGGFLARRRHLDALDKAAEHLQIGLVQLTEFHAGELLAEELRLVQSYLSEITGQFTSDDLLGNIFSSFCIGK.

The (6S)-5-formyl-5,6,7,8-tetrahydrofolate site is built by R21, E78, and K118. Positions 214–375 (GMKVVIAGRP…LREHLKQAMG (162 aa)) constitute a TrmE-type G domain. A K(+)-binding site is contributed by N224. GTP-binding positions include 224-229 (NAGKSS), 243-249 (TDIAGTT), and 268-271 (DTAG). Residue S228 participates in Mg(2+) binding. K(+)-binding residues include T243, I245, and T248. T249 lines the Mg(2+) pocket. K452 contacts (6S)-5-formyl-5,6,7,8-tetrahydrofolate.

The protein belongs to the TRAFAC class TrmE-Era-EngA-EngB-Septin-like GTPase superfamily. TrmE GTPase family. In terms of assembly, homodimer. Heterotetramer of two MnmE and two MnmG subunits. Requires K(+) as cofactor.

It localises to the cytoplasm. Its function is as follows. Exhibits a very high intrinsic GTPase hydrolysis rate. Involved in the addition of a carboxymethylaminomethyl (cmnm) group at the wobble position (U34) of certain tRNAs, forming tRNA-cmnm(5)s(2)U34. The sequence is that of tRNA modification GTPase MnmE from Haemophilus influenzae (strain PittGG).